The chain runs to 371 residues: Peptidyl-prolyl cis-trans isomerase D (371 aa).

The 165-residue stretch at 8–172 folds into the PPIase cyclophilin-type domain; it reads FFDIAIGGQL…EPVVIADCGQ (165 aa). The interval 175 to 202 is disordered; it reads SDDPFLAERTSTDGDPYEDYPDDEDQEL. Acidic residues predominate over residues 189 to 201; sequence DPYEDYPDDEDQE. TPR repeat units lie at residues 212-245, 265-303, and 308-341; these read AKTIREVANRLYKQGDISGALQKYSKSIRYLDVH, APLLLNSALAAIRIEPHSAANAMNAVANTSRALNRLELS, and AKAYYRRGLAKTIMRDEVGAEQDLKTANELLPED.

Belongs to the cyclophilin-type PPIase family. PPIase D subfamily.

Its subcellular location is the cytoplasm. It carries out the reaction [protein]-peptidylproline (omega=180) = [protein]-peptidylproline (omega=0). In terms of biological role, PPIases accelerate the folding of proteins. It catalyzes the cis-trans isomerization of proline imidic peptide bonds in oligopeptides. In Amanita muscaria (Fly agaric), this protein is Peptidyl-prolyl cis-trans isomerase D (Cyp40).